The primary structure comprises 195 residues: Heterogeneous nuclear ribonucleoprotein A/B (195 aa).

The disordered stretch occupies residues 1–23; sequence EEVADGQAHGEXVYREEHHEGEK. Residues 12–23 show a composition bias toward basic and acidic residues; sequence XVYREEHHEGEK. The region spanning 32 to 48 is the RRM domain; sequence EETKLFVGALSWETTEK. Residues Arg-119 and Arg-122 each carry the asymmetric dimethylarginine modification. Position 173 is a phosphoserine; by CK2 (Ser-173).

Extensively phosphorylated on tyrosine residues.

The protein resides in the cytoplasm. The protein localises to the nucleus. Its function is as follows. May regulate mRNA translation and stability. It binds to poly(A) and poly(U) regions of RNA. This binding is inhibited when the protein is phosphorylated. The sequence is that of Heterogeneous nuclear ribonucleoprotein A/B from Artemia salina (Brine shrimp).